Consider the following 55-residue polypeptide: Conotoxin Cal22b (55 aa).

Residues 1-5 (GRPSA) constitute a propeptide that is removed on maturation.

Post-translationally, contains 4 disulfide bonds. In terms of tissue distribution, expressed by the venom duct.

The protein localises to the secreted. Probable neurotoxin with unknown target. Possibly targets ion channels. The polypeptide is Conotoxin Cal22b (Californiconus californicus (California cone)).